The chain runs to 515 residues: Maturase K (515 aa).

It belongs to the intron maturase 2 family. MatK subfamily.

It localises to the plastid. The protein localises to the chloroplast. Its function is as follows. Usually encoded in the trnK tRNA gene intron. Probably assists in splicing its own and other chloroplast group II introns. In Picea sitchensis (Sitka spruce), this protein is Maturase K.